Here is a 184-residue protein sequence, read N- to C-terminus: MIEHNPTTIYGTTIVTVRKDGKVVIAGDGQVSLGNTVMKGNARKVRRIGKGNVIAGFAGATADAFTLLERLEAKLEQYPDQLMRASVELAKDWRTDRYLRKLEAMMLVADSKVTLALTGTGDVLEPEQGVMAIGSGGNYALAAARALIETDKSAEEIARKAMNIAADICIYTNHNIIVESLDAQ.

Residue Thr12 is part of the active site. The Na(+) site is built by Ala166, Cys169, and Thr172.

The protein belongs to the peptidase T1B family. HslV subfamily. In terms of assembly, a double ring-shaped homohexamer of HslV is capped on each side by a ring-shaped HslU homohexamer. The assembly of the HslU/HslV complex is dependent on binding of ATP.

The protein localises to the cytoplasm. The catalysed reaction is ATP-dependent cleavage of peptide bonds with broad specificity.. Its activity is regulated as follows. Allosterically activated by HslU binding. Protease subunit of a proteasome-like degradation complex believed to be a general protein degrading machinery. The polypeptide is ATP-dependent protease subunit HslV (Brucella canis (strain ATCC 23365 / NCTC 10854 / RM-666)).